Reading from the N-terminus, the 487-residue chain is UL37 immediate early glycoprotein (487 aa).

Positions 1 to 22 (MSPVYVNLLGSVGLLAFWYFSY) are cleaved as a signal peptide. Residues 83 to 107 (GEESVTEDTEREDTEEEREDEEEEN) are compositionally biased toward acidic residues. A disordered region spans residues 83 to 121 (GEESVTEDTEREDTEEEREDEEEENEARTPEVNPIDAEG). Residues Asn-206, Asn-210, Asn-219, Asn-223, Asn-242, Asn-246, Asn-275, Asn-281, Asn-294, Asn-297, Asn-306, Asn-333, Asn-337, Asn-343, Asn-379, Asn-384, and Asn-391 are each glycosylated (N-linked (GlcNAc...) asparagine; by host). A helical membrane pass occupies residues 433-459 (WALLSICTVAAGSIALLSLFCILLIGL).

This sequence belongs to the immediate early glycoprotein family. Interacts with host BAX. Interacts with host RSAD2/viperin; this interaction results in RSAD2/viperin relocalization from the endoplasmic reticulum to the mitochondria, actin cytoskeleton disruption and enhancement of infection. Interacts with host PEX19; this interaction inhibits the peroxisomal-dependent antiviral signaling. Interacts with host CHCHD6; this interaction rewires mitochondria by engaging the conserved MICOS complex.

It is found in the host endoplasmic reticulum membrane. The protein resides in the host Golgi apparatus membrane. Its subcellular location is the host mitochondrion membrane. It localises to the host peroxisome. Its function is as follows. Multifunctional transmembrane protein that plays several key roles in viral replication. Rapidely traffics from the host endoplasmic reticulum to the outer mitochondrial membrane where it acts to inhibit host immune response, block apoptotic signaling, regulate calcium flux, and induce mitochondrial fragmentation. Sequesters proapoptotic BAX at the outer mitochondrial membrane and prevents cytochrome c release and subsequent initiation of the proapoptotic cascade. Also provoques a calcium efflux from host endoplasmic reticulum and F-actin cytoskeleton disruption. Participates in the increase of host mitochondrial biogenesis, thus promoting viral replication by efficient use of newly made mitochondria. Additionally, a subset of vMIA localizes to peroxisomes, causing fragmentation and blocking peroxisomal MAVS signaling. Mechanistically, inhibits host MAVS oligomerization at peroxisomes in a mitochondrial fission factors (MFF)-dependent manner and in mitochondria independently of mitochondrial fission factors. Plays an essential role in the trafficking of host viperin/RSAD2 from the endoplasmic reticulum to the viral assembly compartment via the mitochondria during viral infection as failure of viperin to localize to the mitochondria results in insufficient lipogenesis and thus reduces viral replication. In terms of biological role, may play a role in escape from the host antiviral response. In Human cytomegalovirus (strain AD169) (HHV-5), this protein is UL37 immediate early glycoprotein (UL37).